The chain runs to 313 residues: Proclavaminate amidinohydrolase (313 aa).

Residues histidine 121, aspartate 144, histidine 146, aspartate 148, aspartate 235, and aspartate 237 each contribute to the Mn(2+) site.

The protein belongs to the arginase family. In terms of assembly, homohexamer. The cofactor is Mn(2+).

The catalysed reaction is amidinoproclavaminate + H2O = proclavaminate + urea. It functions in the pathway antibiotic biosynthesis; clavulanate biosynthesis; clavulanate from D-glyceraldehyde 3-phosphate and L-arginine: step 4/8. The sequence is that of Proclavaminate amidinohydrolase (pah) from Streptomyces clavuligerus.